The primary structure comprises 386 residues: S-adenosylmethionine synthase (386 aa).

His16 serves as a coordination point for ATP. Asp18 contributes to the Mg(2+) binding site. Residue Glu44 participates in K(+) binding. The L-methionine site is built by Glu57 and Gln100. Positions Gln100–Gln110 are flexible loop. Residues Asp164–Lys166, Arg231–Phe232, Asp240, Arg246–Lys247, Ala263, and Lys267 contribute to the ATP site. Asp240 serves as a coordination point for L-methionine. Lys271 lines the L-methionine pocket.

It belongs to the AdoMet synthase family. Homotetramer; dimer of dimers. Requires Mg(2+) as cofactor. It depends on K(+) as a cofactor.

It localises to the cytoplasm. It catalyses the reaction L-methionine + ATP + H2O = S-adenosyl-L-methionine + phosphate + diphosphate. It functions in the pathway amino-acid biosynthesis; S-adenosyl-L-methionine biosynthesis; S-adenosyl-L-methionine from L-methionine: step 1/1. Functionally, catalyzes the formation of S-adenosylmethionine (AdoMet) from methionine and ATP. The overall synthetic reaction is composed of two sequential steps, AdoMet formation and the subsequent tripolyphosphate hydrolysis which occurs prior to release of AdoMet from the enzyme. This is S-adenosylmethionine synthase from Sulfurovum sp. (strain NBC37-1).